Consider the following 155-residue polypeptide: uncharacterized protein (155 aa).

The signal sequence occupies residues 1 to 23; that stretch reads MTILSLSRFMLAGVLLASFNASA.

It to E.coli YfjT.

This is an uncharacterized protein from Escherichia coli (strain K12).